The following is a 325-amino-acid chain: DNA-directed RNA polymerase subunit alpha (325 aa).

The tract at residues 1-239 (MQQFLRYNIN…DHLKPLIDIN (239 aa)) is alpha N-terminal domain (alpha-NTD). The alpha C-terminal domain (alpha-CTD) stretch occupies residues 255-325 (EKNKKLSIPI…ELYDLKLKNN (71 aa)).

Belongs to the RNA polymerase alpha chain family. Homodimer. The RNAP catalytic core consists of 2 alpha, 1 beta, 1 beta' and 1 omega subunit. When a sigma factor is associated with the core the holoenzyme is formed, which can initiate transcription.

It catalyses the reaction RNA(n) + a ribonucleoside 5'-triphosphate = RNA(n+1) + diphosphate. DNA-dependent RNA polymerase catalyzes the transcription of DNA into RNA using the four ribonucleoside triphosphates as substrates. In Mycoplasmoides gallisepticum (strain R(low / passage 15 / clone 2)) (Mycoplasma gallisepticum), this protein is DNA-directed RNA polymerase subunit alpha.